The following is a 371-amino-acid chain: Queuine tRNA-ribosyltransferase (371 aa).

Asp89 serves as the catalytic Proton acceptor. Substrate contacts are provided by residues 89-93, Asp143, Gln185, and Gly212; that span reads DSGGF. The tract at residues 243-249 is RNA binding; sequence GVGKPED. Catalysis depends on Asp262, which acts as the Nucleophile. The segment at 267-271 is RNA binding; important for wobble base 34 recognition; the sequence is TRNAR. The Zn(2+) site is built by Cys300, Cys302, Cys305, and His331.

The protein belongs to the queuine tRNA-ribosyltransferase family. Homodimer. Within each dimer, one monomer is responsible for RNA recognition and catalysis, while the other monomer binds to the replacement base PreQ1. Zn(2+) serves as cofactor.

The catalysed reaction is 7-aminomethyl-7-carbaguanine + guanosine(34) in tRNA = 7-aminomethyl-7-carbaguanosine(34) in tRNA + guanine. The protein operates within tRNA modification; tRNA-queuosine biosynthesis. Its function is as follows. Catalyzes the base-exchange of a guanine (G) residue with the queuine precursor 7-aminomethyl-7-deazaguanine (PreQ1) at position 34 (anticodon wobble position) in tRNAs with GU(N) anticodons (tRNA-Asp, -Asn, -His and -Tyr). Catalysis occurs through a double-displacement mechanism. The nucleophile active site attacks the C1' of nucleotide 34 to detach the guanine base from the RNA, forming a covalent enzyme-RNA intermediate. The proton acceptor active site deprotonates the incoming PreQ1, allowing a nucleophilic attack on the C1' of the ribose to form the product. After dissociation, two additional enzymatic reactions on the tRNA convert PreQ1 to queuine (Q), resulting in the hypermodified nucleoside queuosine (7-(((4,5-cis-dihydroxy-2-cyclopenten-1-yl)amino)methyl)-7-deazaguanosine). This chain is Queuine tRNA-ribosyltransferase, found in Pseudomonas syringae pv. tomato (strain ATCC BAA-871 / DC3000).